Here is a 303-residue protein sequence, read N- to C-terminus: Elongation factor Ts (303 aa).

Residues Thr-79–Thr-82 are involved in Mg(2+) ion dislocation from EF-Tu.

Belongs to the EF-Ts family.

Its subcellular location is the cytoplasm. Its function is as follows. Associates with the EF-Tu.GDP complex and induces the exchange of GDP to GTP. It remains bound to the aminoacyl-tRNA.EF-Tu.GTP complex up to the GTP hydrolysis stage on the ribosome. The sequence is that of Elongation factor Ts from Magnetococcus marinus (strain ATCC BAA-1437 / JCM 17883 / MC-1).